The sequence spans 670 residues: Oligopeptidase PepF (670 aa).

Histidine 456 contributes to the Zn(2+) binding site. Glutamate 457 is a catalytic residue. Zn(2+) contacts are provided by histidine 460 and histidine 463.

This sequence belongs to the peptidase M3B family. Zn(2+) is required as a cofactor.

The protein localises to the cytoplasm. Overexpression results in inhibition of sporulation initiation. This sporulation deficiency could be the result of hydrolysis by PepF of the PhrA peptide, a phosphatase regulator. Thus, overexpression of PepF appears to act at the level of the phosphorelay, most likely through modulation of the negative role played by phosphatases. Overexpression of PepF also affects the activity of the competence and sporulation stimulating factor PhrC. The polypeptide is Oligopeptidase PepF (Bacillus subtilis (strain 168)).